A 387-amino-acid chain; its full sequence is Phosphoglycerate kinase (387 aa).

Substrate is bound by residues 21-23 (DLN), Arg36, 59-62 (HLGR), Arg113, and Arg146. ATP contacts are provided by residues Lys197, Glu314, and 340–343 (GGDT).

It belongs to the phosphoglycerate kinase family. Monomer.

It localises to the cytoplasm. The enzyme catalyses (2R)-3-phosphoglycerate + ATP = (2R)-3-phospho-glyceroyl phosphate + ADP. The protein operates within carbohydrate degradation; glycolysis; pyruvate from D-glyceraldehyde 3-phosphate: step 2/5. The chain is Phosphoglycerate kinase from Aeromonas salmonicida (strain A449).